The primary structure comprises 137 residues: Putative pre-16S rRNA nuclease (137 aa).

Belongs to the YqgF nuclease family.

The protein localises to the cytoplasm. Its function is as follows. Could be a nuclease involved in processing of the 5'-end of pre-16S rRNA. This chain is Putative pre-16S rRNA nuclease, found in Actinobacillus pleuropneumoniae serotype 7 (strain AP76).